The chain runs to 309 residues: Uridylate-specific endoribonuclease C (309 aa).

An N-terminal signal peptide occupies residues 1–22 (MASGYDFGWIPVLLSLFTLTDA). Residues 27 to 303 (VNQELSNIFN…IGTAYPKLLS (277 aa)) enclose the EndoU domain. Asn-53 and Asn-121 each carry an N-linked (GlcNAc...) asparagine glycan. Active-site residues include His-181, His-197, and Lys-242.

It belongs to the ENDOU family. As to quaternary structure, monomer. Mn(2+) is required as a cofactor.

It is found in the secreted. It catalyses the reaction ribonucleotidyl-uridine-RNA = a 5'-end dephospho-uridine-RNA + a 3'-end 2',3'-cyclophospho-ribonucleotide-RNA. In terms of biological role, endoribonuclease that cleaves single-stranded RNAs at 5' of uridylates and releases a product with a 2',3'-cyclic phosphate at the 3'-end. The UU and GU sites are more efficiently cleaved than CU and AU sites. The sequence is that of Uridylate-specific endoribonuclease C (endouc) from Danio rerio (Zebrafish).